The chain runs to 80 residues: Protein FAM229B (80 aa).

The interval 1–44 is disordered; sequence MPFQFGTQPRRFPVEGGDSSIELEPGLSSSAACNGKEMSPTRQL.

This sequence belongs to the FAM229 family.

In Homo sapiens (Human), this protein is Protein FAM229B (FAM229B).